We begin with the raw amino-acid sequence, 490 residues long: Membrane-bound lytic murein transglycosylase F (490 aa).

A signal peptide spans 1–32 (MFALTAYRLRCAAWLLATGIFLLLAGCSEAKA). The non-LT domain stretch occupies residues 33–269 (PTALERVQKE…RLKDRYYGHV (237 aa)). An LT domain region spans residues 270–490 (DVLGYVGAYT…PEEDSGDEKL (221 aa)). Residue E316 is part of the active site. The interval 467–490 (AESGLHLPGVNKTRPEEDSGDEKL) is disordered. Positions 479–490 (TRPEEDSGDEKL) are enriched in basic and acidic residues.

In the N-terminal section; belongs to the bacterial solute-binding protein 3 family. This sequence in the C-terminal section; belongs to the transglycosylase Slt family.

Its subcellular location is the cell outer membrane. The catalysed reaction is Exolytic cleavage of the (1-&gt;4)-beta-glycosidic linkage between N-acetylmuramic acid (MurNAc) and N-acetylglucosamine (GlcNAc) residues in peptidoglycan, from either the reducing or the non-reducing ends of the peptidoglycan chains, with concomitant formation of a 1,6-anhydrobond in the MurNAc residue.. Murein-degrading enzyme that degrades murein glycan strands and insoluble, high-molecular weight murein sacculi, with the concomitant formation of a 1,6-anhydromuramoyl product. Lytic transglycosylases (LTs) play an integral role in the metabolism of the peptidoglycan (PG) sacculus. Their lytic action creates space within the PG sacculus to allow for its expansion as well as for the insertion of various structures such as secretion systems and flagella. The protein is Membrane-bound lytic murein transglycosylase F of Pseudomonas aeruginosa (strain ATCC 15692 / DSM 22644 / CIP 104116 / JCM 14847 / LMG 12228 / 1C / PRS 101 / PAO1).